We begin with the raw amino-acid sequence, 107 residues long: UPF0060 membrane protein M446_5886 (107 aa).

Transmembrane regions (helical) follow at residues 4–24, 31–51, 59–79, and 85–105; these read LLAY…IWAW, PLWL…LTRV, AYAA…WAAE, and RWDL…LLGP.

It belongs to the UPF0060 family.

The protein localises to the cell inner membrane. The polypeptide is UPF0060 membrane protein M446_5886 (Methylobacterium sp. (strain 4-46)).